A 526-amino-acid chain; its full sequence is Exodeoxyribonuclease 7 large subunit (526 aa).

The segment at 497–526 (AMTTEGGTPPGGAKKRSTKPAEPTKQGSLF) is disordered.

It belongs to the XseA family. As to quaternary structure, heterooligomer composed of large and small subunits.

It localises to the cytoplasm. The catalysed reaction is Exonucleolytic cleavage in either 5'- to 3'- or 3'- to 5'-direction to yield nucleoside 5'-phosphates.. Functionally, bidirectionally degrades single-stranded DNA into large acid-insoluble oligonucleotides, which are then degraded further into small acid-soluble oligonucleotides. In Rhizobium etli (strain ATCC 51251 / DSM 11541 / JCM 21823 / NBRC 15573 / CFN 42), this protein is Exodeoxyribonuclease 7 large subunit.